A 353-amino-acid chain; its full sequence is S-adenosylmethionine:tRNA ribosyltransferase-isomerase (353 aa).

The protein belongs to the QueA family. In terms of assembly, monomer.

Its subcellular location is the cytoplasm. The enzyme catalyses 7-aminomethyl-7-carbaguanosine(34) in tRNA + S-adenosyl-L-methionine = epoxyqueuosine(34) in tRNA + adenine + L-methionine + 2 H(+). The protein operates within tRNA modification; tRNA-queuosine biosynthesis. In terms of biological role, transfers and isomerizes the ribose moiety from AdoMet to the 7-aminomethyl group of 7-deazaguanine (preQ1-tRNA) to give epoxyqueuosine (oQ-tRNA). In Blochmanniella floridana, this protein is S-adenosylmethionine:tRNA ribosyltransferase-isomerase.